The sequence spans 344 residues: Cell cycle control protein 50C (344 aa).

The Cytoplasmic segment spans residues 1 to 34 (MEETPQHCLSRLPDNSALKQQELPAHRLYFTARR). The helical transmembrane segment at 35-55 (VLFVFFTTGIFCLCMGIILIL) threads the bilayer. At 56-306 (SARSTQEIEI…STLTWCGGNS (251 aa)) the chain is on the extracellular side. Asparagine 66 and asparagine 261 each carry an N-linked (GlcNAc...) asparagine glycan. The chain crosses the membrane as a helical span at residues 307–327 (LFLGLAYTVTGAITWLASFTM). Residues 328–344 (MAIHITLKNKQMSFFHQ) are Cytoplasmic-facing.

This sequence belongs to the CDC50/LEM3 family. As to expression, specifically expressed in testis.

It is found in the membrane. The chain is Cell cycle control protein 50C (TMEM30C) from Macaca fascicularis (Crab-eating macaque).